A 374-amino-acid polypeptide reads, in one-letter code: Chaperone protein DnaJ (374 aa).

Residues 5 to 70 form the J domain; sequence DYYEVLGVER…SKRAAYDQYG (66 aa). A CR-type zinc finger spans residues 133–211; sequence GTTVNIRVPT…CHGEGRVEEY (79 aa). Zn(2+) contacts are provided by C146, C149, C163, C166, C185, C188, C199, and C202. CXXCXGXG motif repeat units follow at residues 146 to 153, 163 to 170, 185 to 192, and 199 to 206; these read CKPCDGSG, CPTCGGIG, CPRCHGQG, and CDSCHGEG.

It belongs to the DnaJ family. In terms of assembly, homodimer. The cofactor is Zn(2+).

It is found in the cytoplasm. Functionally, participates actively in the response to hyperosmotic and heat shock by preventing the aggregation of stress-denatured proteins and by disaggregating proteins, also in an autonomous, DnaK-independent fashion. Unfolded proteins bind initially to DnaJ; upon interaction with the DnaJ-bound protein, DnaK hydrolyzes its bound ATP, resulting in the formation of a stable complex. GrpE releases ADP from DnaK; ATP binding to DnaK triggers the release of the substrate protein, thus completing the reaction cycle. Several rounds of ATP-dependent interactions between DnaJ, DnaK and GrpE are required for fully efficient folding. Also involved, together with DnaK and GrpE, in the DNA replication of plasmids through activation of initiation proteins. The sequence is that of Chaperone protein DnaJ from Pseudomonas fluorescens (strain ATCC BAA-477 / NRRL B-23932 / Pf-5).